Here is a 323-residue protein sequence, read N- to C-terminus: Transcription initiation factor IIB 7 (323 aa).

A compositionally biased stretch (basic and acidic residues) spans 1–16; it reads MTRSTRQRERETAAKQ. Positions 1–35 are disordered; sequence MTRSTRQRERETAAKQEEEEDSEEGVRECPECGSD. The TFIIB-type zinc-finger motif lies at 24 to 56; sequence EGVRECPECGSDNLVKSSDRAELVCNDCGLVVE. Zn(2+) contacts are provided by Cys29, Cys32, Cys48, and Cys51. Repeat copies occupy residues 142–225 and 236–317.

The protein belongs to the TFIIB family.

Functionally, stabilizes TBP binding to an archaeal box-A promoter. Also responsible for recruiting RNA polymerase II to the pre-initiation complex (DNA-TBP-TFIIB). This is Transcription initiation factor IIB 7 from Halobacterium salinarum (strain ATCC 700922 / JCM 11081 / NRC-1) (Halobacterium halobium).